Consider the following 491-residue polypeptide: Putative pentatricopeptide repeat-containing protein At1g02420 (491 aa).

PPR repeat units lie at residues 179–209, 210–244, 245–279, 280–314, 315–349, 350–384, 385–419, and 420–454; these read DTAC…LKHQ, FQPD…GLKP, DVVT…EETP, DVIT…GCYP, DVAA…GLSP, NATT…ECLP, NTQS…GFGS, and YSLV…GHRP.

Belongs to the PPR family. P subfamily.

The chain is Putative pentatricopeptide repeat-containing protein At1g02420 from Arabidopsis thaliana (Mouse-ear cress).